Here is a 193-residue protein sequence, read N- to C-terminus: Interferon lambda-3 (193 aa).

An N-terminal signal peptide occupies residues Met1 to Ala19. Cystine bridges form between Cys35–Cys132, Cys69–Cys166, and Cys185–Cys192.

It belongs to the lambda interferon family.

It is found in the secreted. Its function is as follows. Cytokine with antiviral, antitumour and immunomodulatory activities. Plays a critical role in the antiviral host defense, predominantly in the epithelial tissues. Acts as a ligand for the heterodimeric class II cytokine receptor composed of IL10RB and IFNLR1, and receptor engagement leads to the activation of the JAK/STAT signaling pathway resulting in the expression of IFN-stimulated genes (ISG), which mediate the antiviral state. Has a restricted receptor distribution and therefore restricted targets: is primarily active in epithelial cells and this cell type-selective action is because of the epithelial cell-specific expression of its receptor IFNLR1. Seems not to be essential for early virus-activated host defense in vaginal infection, but plays an important role in Toll-like receptor (TLR)-induced antiviral defense. Plays a significant role in the antiviral immune defense in the intestinal epithelium. Exerts an immunomodulatory effect by up-regulating MHC class I antigen expression. This chain is Interferon lambda-3 (Ifnl3), found in Mus musculus (Mouse).